We begin with the raw amino-acid sequence, 255 residues long: S-adenosyl-L-methionine-dependent uroporphyrinogen III methyltransferase (255 aa).

Residues proline 15, 91-93 (GGD), 121-122 (TS), methionine 175, and alanine 232 contribute to the S-adenosyl-L-homocysteine site.

It belongs to the precorrin methyltransferase family. Homodimer.

The enzyme catalyses uroporphyrinogen III + 2 S-adenosyl-L-methionine = precorrin-2 + 2 S-adenosyl-L-homocysteine + H(+). It functions in the pathway porphyrin-containing compound metabolism; siroheme biosynthesis; precorrin-2 from uroporphyrinogen III: step 1/1. In terms of biological role, involved in the archaeal biosynthesis of heme. Catalyzes the methylation of carbons 2 and 7 of uroporphyrinogen-III (UROGEN) to yield precorrin-2. It does not catalyze the overmethylation of precorrin-2 to trimethylpyrrocorphin. This chain is S-adenosyl-L-methionine-dependent uroporphyrinogen III methyltransferase, found in Methanosarcina barkeri (strain Fusaro / DSM 804).